A 402-amino-acid chain; its full sequence is Cysteine-rich venom protein (402 aa).

A signal peptide spans 1 to 13 (MNLALFIIFATIF). One can recognise an SCP domain in the interval 57–199 (LETHNQLRNK…VKKVLYTCNY (143 aa)).

It belongs to the CRISP family. Contains 7 disulfide bonds. In terms of tissue distribution, expressed by the venom gland.

It is found in the secreted. This Tityus serrulatus (Brazilian scorpion) protein is Cysteine-rich venom protein.